A 195-amino-acid polypeptide reads, in one-letter code: Imidazoleglycerol-phosphate dehydratase (195 aa).

This sequence belongs to the imidazoleglycerol-phosphate dehydratase family.

It localises to the cytoplasm. It carries out the reaction D-erythro-1-(imidazol-4-yl)glycerol 3-phosphate = 3-(imidazol-4-yl)-2-oxopropyl phosphate + H2O. The protein operates within amino-acid biosynthesis; L-histidine biosynthesis; L-histidine from 5-phospho-alpha-D-ribose 1-diphosphate: step 6/9. The polypeptide is Imidazoleglycerol-phosphate dehydratase (Geobacillus thermodenitrificans (strain NG80-2)).